We begin with the raw amino-acid sequence, 451 residues long: CDP-diacylglycerol--serine O-phosphatidyltransferase PssA (451 aa).

PLD phosphodiesterase domains are found at residues 27-224 (VDFF…ELRD) and 239-451 (SVTP…SRIL). 14 residues coordinate a CDP-1,2-diacyl-sn-glycerol: L56, Y57, R91, R94, R96, I97, E132, A133, V136, H138, K140, G152, Y159, and R167. The active site involves H138. The active site involves D169. A CDP-1,2-diacyl-sn-glycerol contacts are provided by Y273, D305, F306, I316, I317, L320, L323, and Y324. The active site involves H357. 3 residues coordinate a CDP-1,2-diacyl-sn-glycerol: K359, N374, and R378. E385 is a catalytic residue. 4 residues coordinate a CDP-1,2-diacyl-sn-glycerol: L438, I447, I450, and L451.

It belongs to the CDP-alcohol phosphatidyltransferase class-II family. As to quaternary structure, multimeric. Interacts with ACP, YbgC and PlsB, forming altogether a complex at the inner membrane. Monomeric and dimeric; existing in equilibrium, but the monomer probably exhibits preferential membrane association.

It localises to the cytoplasm. The protein localises to the cell inner membrane. The enzyme catalyses a CDP-1,2-diacyl-sn-glycerol + L-serine = a 1,2-diacyl-sn-glycero-3-phospho-L-serine + CMP + H(+). Its pathway is phospholipid metabolism; phosphatidylethanolamine biosynthesis; phosphatidylethanolamine from CDP-diacylglycerol: step 1/2. Its function is as follows. Catalyzes the conversion of cytidine diphosphate diacylglycerol (CDP-DG) and L-serine into phosphatidylserine. Essential for biosynthesis of phosphatidylethanolamine, one of the major membrane phospholipids. Phosphatidylserine is later converted into phosphatidylethanolamine via the action of phosphatidylserine decarboxylase psd. Associates with the bacterial membrane for its role, which depends on the levels of anionic phospholipids in the membrane. This is CDP-diacylglycerol--serine O-phosphatidyltransferase PssA (pssA) from Escherichia coli (strain K12).